Reading from the N-terminus, the 280-residue chain is Suppressor of disruption of TFIIS (280 aa).

The protein belongs to the SSM1 family.

Functionally, could be an enzyme that inactivates 6-azauracil by modifying it. The sequence is that of Suppressor of disruption of TFIIS (SDT1) from Saccharomyces cerevisiae (strain ATCC 204508 / S288c) (Baker's yeast).